Here is a 341-residue protein sequence, read N- to C-terminus: DNA fragmentation factor subunit beta (341 aa).

One can recognise a CIDE-N domain in the interval 7–83; that stretch reads KPKTFKLRSL…LLTAGQTWQG (77 aa).

Heterodimer of DFFA and DFFB. Interacts with H1-1.

It localises to the cytoplasm. The protein resides in the nucleus. Its activity is regulated as follows. Inhibited by DFFA (DFF45). Interacts with HIST1H1A. In terms of biological role, nuclease that induces DNA fragmentation and chromatin condensation during apoptosis. Degrades naked DNA and induces apoptotic morphology. This is DNA fragmentation factor subunit beta (DFFB) from Bos taurus (Bovine).